A 210-amino-acid chain; its full sequence is Syntaxin-binding protein 6 (210 aa).

Serine 2 carries the N-acetylserine modification. A v-SNARE coiled-coil homology domain is found at 151–210; the sequence is GNSILHSAADSVTSAVQKASQALNERGERLGRAEEKTEDLKNSAQQFAETAHKLAMKHKC.

As to quaternary structure, part of a ternary complex containing SNAP25 and STX1A that can be dissociated by NAPA and NSF. Interacts with STX4A. As to expression, detected at low levels in brain, and at very low levels in heart, adrenal gland, testis, liver and kidney.

It localises to the cytoplasm. The protein resides in the membrane. In terms of biological role, forms non-fusogenic complexes with SNAP25 and STX1A and may thereby modulate the formation of functional SNARE complexes and exocytosis. This is Syntaxin-binding protein 6 (STXBP6) from Homo sapiens (Human).